A 207-amino-acid chain; its full sequence is Superoxide dismutase [Mn] (207 aa).

His-28, His-76, Asp-160, and His-164 together coordinate Mn(2+).

This sequence belongs to the iron/manganese superoxide dismutase family. As to quaternary structure, homotetramer. Mn(2+) is required as a cofactor.

It is found in the secreted. The catalysed reaction is 2 superoxide + 2 H(+) = H2O2 + O2. Its function is as follows. Destroys superoxide anion radicals which are normally produced within the cells and which are toxic to biological systems. The sequence is that of Superoxide dismutase [Mn] (sodA) from Mycolicibacterium smegmatis (Mycobacterium smegmatis).